Reading from the N-terminus, the 1587-residue chain is Pentafunctional AROM polypeptide (1587 aa).

Residues 1–384 (MIEPTKISIL…YEPRASVVAN (384 aa)) are 3-dehydroquinate synthase. NAD(+) contacts are provided by residues 44 to 46 (DTN), 81 to 84 (EVSK), 114 to 116 (GGV), and Asp-119. A 7-phospho-2-dehydro-3-deoxy-D-arabino-heptonate-binding site is contributed by Arg-130. 139–140 (TT) provides a ligand contact to NAD(+). 7-phospho-2-dehydro-3-deoxy-D-arabino-heptonate contacts are provided by Asp-146 and Lys-152. An NAD(+)-binding site is contributed by Lys-161. Position 162 (Asn-162) interacts with 7-phospho-2-dehydro-3-deoxy-D-arabino-heptonate. NAD(+) contacts are provided by residues 179-182 (FLET) and Asn-190. Glu-194 contributes to the Zn(2+) binding site. Residues 194–197 (EVIK) and Lys-250 contribute to the 7-phospho-2-dehydro-3-deoxy-D-arabino-heptonate site. Catalysis depends on Glu-260, which acts as the Proton acceptor; for 3-dehydroquinate synthase activity. 7-phospho-2-dehydro-3-deoxy-D-arabino-heptonate-binding positions include 264–268 (RNLLN) and His-271. His-271 lines the Zn(2+) pocket. Residue His-275 is the Proton acceptor; for 3-dehydroquinate synthase activity of the active site. Residues His-287 and Lys-356 each contribute to the 7-phospho-2-dehydro-3-deoxy-D-arabino-heptonate site. His-287 provides a ligand contact to Zn(2+). Residues 397–842 (VFPGVSPKST…WDTLRLKFAV (446 aa)) are EPSP synthase. Catalysis depends on Cys-824, which acts as the For EPSP synthase activity. The segment at 864-1055 (SASVFIIGMR…KKKQHSFFVS (192 aa)) is shikimate kinase. ATP is bound at residue 871–878 (GMRGAGKT). The interval 1056-1276 (LTLPDLRPAG…AAPGQLSATE (221 aa)) is 3-dehydroquinase. The Proton acceptor; for 3-dehydroquinate dehydratase activity role is filled by His-1179. Lys-1207 (schiff-base intermediate with substrate; for 3-dehydroquinate dehydratase activity) is an active-site residue. Residues 1289–1587 (KKRFALFGTP…RDAVLGTKAD (299 aa)) form a shikimate dehydrogenase region.

In the N-terminal section; belongs to the sugar phosphate cyclases superfamily. Dehydroquinate synthase family. It in the 2nd section; belongs to the EPSP synthase family. This sequence in the 3rd section; belongs to the shikimate kinase family. The protein in the 4th section; belongs to the type-I 3-dehydroquinase family. In the C-terminal section; belongs to the shikimate dehydrogenase family. In terms of assembly, homodimer. The cofactor is Zn(2+).

The protein localises to the cytoplasm. It carries out the reaction 7-phospho-2-dehydro-3-deoxy-D-arabino-heptonate = 3-dehydroquinate + phosphate. The enzyme catalyses 3-dehydroquinate = 3-dehydroshikimate + H2O. The catalysed reaction is shikimate + NADP(+) = 3-dehydroshikimate + NADPH + H(+). It catalyses the reaction shikimate + ATP = 3-phosphoshikimate + ADP + H(+). It carries out the reaction 3-phosphoshikimate + phosphoenolpyruvate = 5-O-(1-carboxyvinyl)-3-phosphoshikimate + phosphate. The protein operates within metabolic intermediate biosynthesis; chorismate biosynthesis; chorismate from D-erythrose 4-phosphate and phosphoenolpyruvate: step 2/7. It functions in the pathway metabolic intermediate biosynthesis; chorismate biosynthesis; chorismate from D-erythrose 4-phosphate and phosphoenolpyruvate: step 3/7. It participates in metabolic intermediate biosynthesis; chorismate biosynthesis; chorismate from D-erythrose 4-phosphate and phosphoenolpyruvate: step 4/7. Its pathway is metabolic intermediate biosynthesis; chorismate biosynthesis; chorismate from D-erythrose 4-phosphate and phosphoenolpyruvate: step 5/7. The protein operates within metabolic intermediate biosynthesis; chorismate biosynthesis; chorismate from D-erythrose 4-phosphate and phosphoenolpyruvate: step 6/7. In terms of biological role, the AROM polypeptide catalyzes 5 consecutive enzymatic reactions in prechorismate polyaromatic amino acid biosynthesis. This is Pentafunctional AROM polypeptide from Aspergillus clavatus (strain ATCC 1007 / CBS 513.65 / DSM 816 / NCTC 3887 / NRRL 1 / QM 1276 / 107).